A 257-amino-acid chain; its full sequence is Phosphate import ATP-binding protein PstB (257 aa).

Residues 11–252 (IQVRDLNFYY…PAKKQTEDYI (242 aa)) form the ABC transporter domain. 43–50 (GPSGCGKS) contacts ATP.

It belongs to the ABC transporter superfamily. Phosphate importer (TC 3.A.1.7) family. As to quaternary structure, the complex is composed of two ATP-binding proteins (PstB), two transmembrane proteins (PstC and PstA) and a solute-binding protein (PstS).

Its subcellular location is the cell inner membrane. It carries out the reaction phosphate(out) + ATP + H2O = ADP + 2 phosphate(in) + H(+). Its function is as follows. Part of the ABC transporter complex PstSACB involved in phosphate import. Responsible for energy coupling to the transport system. In Enterobacter cloacae, this protein is Phosphate import ATP-binding protein PstB.